Reading from the N-terminus, the 339-residue chain is 2-halobenzoate 1,2-dioxygenase electron transfer component (339 aa).

Positions 3 to 96 constitute a 2Fe-2S ferredoxin-type domain; it reads HSIALRFEDD…DCVVRILASS (94 aa). Positions 40, 45, 48, and 80 each coordinate [2Fe-2S] cluster. The interval 98–336 is ferredoxin-reductase; that stretch reads ACQVKKSTMT…NFYFEKFAPT (239 aa). Residues 103-203 enclose the FAD-binding FR-type domain; it reads KSTMTGQMTE…DGPYGAFYLR (101 aa).

Belongs to the bacterial ring-hydroxylating dioxygenase ferredoxin reductase family. As to quaternary structure, monomer. It is part of 2-halobenzoate dioxygenase two component enzyme system. The other component is a dioxygenase component consisting of 3 large (CbdA) subunits and 3 small (CbdB) subunits. The cofactor is FAD. It depends on [2Fe-2S] cluster as a cofactor.

It carries out the reaction 2 reduced [2Fe-2S]-[ferredoxin] + NAD(+) + H(+) = 2 oxidized [2Fe-2S]-[ferredoxin] + NADH. It functions in the pathway xenobiotic degradation; benzoate degradation via CoA ligation. Electron transfer component of 2-halobenzoate 1,2-dioxygenase system. The polypeptide is 2-halobenzoate 1,2-dioxygenase electron transfer component (cbdC) (Burkholderia cepacia (Pseudomonas cepacia)).